The chain runs to 560 residues: Dimethylaniline monooxygenase [N-oxide-forming] 4 (560 aa).

Residues 9–13 (GAGVS), Glu32, and 40–41 (LW) contribute to the FAD site. Residues 60 to 61 (TN) and 195 to 198 (TGGD) each bind NADP(+). Residues 519–539 (APVLIVSLLLIYKSSLFLELV) traverse the membrane as a helical segment.

Belongs to the FMO family. The cofactor is FAD. As to expression, detected in liver and kidney (at protein level).

The protein localises to the microsome membrane. It is found in the endoplasmic reticulum membrane. It catalyses the reaction N,N-dimethylaniline + NADPH + O2 + H(+) = N,N-dimethylaniline N-oxide + NADP(+) + H2O. This protein is involved in the oxidative metabolism of a variety of xenobiotics such as drugs and pesticides. The protein is Dimethylaniline monooxygenase [N-oxide-forming] 4 (Fmo4) of Rattus norvegicus (Rat).